Consider the following 623-residue polypeptide: Glutathione import ATP-binding protein GsiA (623 aa).

ABC transporter domains lie at 15-269 and 325-564; these read VSGL…QTLL and LRSG…RKLM. ATP-binding positions include 49 to 56 and 357 to 364; these read GESGSGKS.

Belongs to the ABC transporter superfamily. Glutathione importer (TC 3.A.1.5.11) family. The complex is composed of two ATP-binding proteins (GsiA), two transmembrane proteins (GsiC and GsiD) and a solute-binding protein (GsiB).

Its subcellular location is the cell inner membrane. It carries out the reaction glutathione(out) + ATP + H2O = glutathione(in) + ADP + phosphate + H(+). Part of the ABC transporter complex GsiABCD involved in glutathione import. Responsible for energy coupling to the transport system. The chain is Glutathione import ATP-binding protein GsiA from Salmonella typhi.